Here is a 400-residue protein sequence, read N- to C-terminus: Deoxyguanosinetriphosphate triphosphohydrolase-like protein (400 aa).

Residues 73-215 (RLTHSIEVSQ…AAIADDIAYN (143 aa)) form the HD domain.

The protein belongs to the dGTPase family. Type 2 subfamily.

The chain is Deoxyguanosinetriphosphate triphosphohydrolase-like protein from Bartonella henselae (strain ATCC 49882 / DSM 28221 / CCUG 30454 / Houston 1) (Rochalimaea henselae).